A 401-amino-acid chain; its full sequence is MGNKLGRKRQVVEERYTKPQGLYVNKDVDVKKLRKLIVESKLAPCYPGDDESCHDLEECPICFLYYPSLNRSRCCMKSICTECFLQMKNPNSARPTQCPFCKTPNYAVEYRGVKSKEEKGIEQVEEQRVIEAKIRMRQKEMQDDEEKMQKRLESCSSSTSAMTGEMEYGSTSAISYNSLMDDGEIAPSQNASVVRQHSRPRGNREDEVDVDLEELMVMEAIWLSVQETGTQRNSASGEITSSRQYVTDNHSYVSSPPRVTPIVEPATPSSSSGGLSCAISALAERQMVGESSSHNHNHNVNVSSYSMLPGNCDSYYDIEQEVDGIDNHHHHRHHYEMGETGSSNSYVSSYMTGEGFHNFPPPPPLVIVPESFEEQMMMAMAVSMAEVHATTTCAPTEVTWQ.

An RING-type; degenerate zinc finger spans residues 59–102; the sequence is CPICFLYYPSLNRSRCCMKSICTECFLQMKNPNSARPTQCPFCK. Residues 139–153 are compositionally biased toward basic and acidic residues; it reads KEMQDDEEKMQKRLE. The disordered stretch occupies residues 139-164; it reads KEMQDDEEKMQKRLESCSSSTSAMTG.

In terms of assembly, interacts with DA1 (via C-terminus).

It catalyses the reaction S-ubiquitinyl-[E2 ubiquitin-conjugating enzyme]-L-cysteine + [acceptor protein]-L-lysine = [E2 ubiquitin-conjugating enzyme]-L-cysteine + N(6)-ubiquitinyl-[acceptor protein]-L-lysine.. It functions in the pathway protein modification; protein ubiquitination. Functionally, E3 ubiquitin-protein ligase involved in the regulation of organ and seed size. Acts synergistically with DA1 to regulate seed size. Functions synergistically with DA1 to restrict cell proliferation in the maternal integuments of ovules and developing seeds. Seems to function independently of BB. Possesses E3 ubiquitin-protein ligase activity in vitro. Polyubiquitinates DA1, DAR1 and DAR2, but not DAR3. The protein is E3 ubiquitin-protein ligase DA2 of Arabidopsis thaliana (Mouse-ear cress).